The chain runs to 521 residues: Bifunctional purine biosynthesis protein PurH (521 aa).

Residues Met-1–Val-145 form the MGS-like domain.

This sequence belongs to the PurH family.

It carries out the reaction (6R)-10-formyltetrahydrofolate + 5-amino-1-(5-phospho-beta-D-ribosyl)imidazole-4-carboxamide = 5-formamido-1-(5-phospho-D-ribosyl)imidazole-4-carboxamide + (6S)-5,6,7,8-tetrahydrofolate. It catalyses the reaction IMP + H2O = 5-formamido-1-(5-phospho-D-ribosyl)imidazole-4-carboxamide. It participates in purine metabolism; IMP biosynthesis via de novo pathway; 5-formamido-1-(5-phospho-D-ribosyl)imidazole-4-carboxamide from 5-amino-1-(5-phospho-D-ribosyl)imidazole-4-carboxamide (10-formyl THF route): step 1/1. The protein operates within purine metabolism; IMP biosynthesis via de novo pathway; IMP from 5-formamido-1-(5-phospho-D-ribosyl)imidazole-4-carboxamide: step 1/1. The protein is Bifunctional purine biosynthesis protein PurH of Burkholderia multivorans (strain ATCC 17616 / 249).